The chain runs to 420 residues: Putative polyketide beta-ketoacyl synthase 1 (420 aa).

One can recognise a Ketosynthase family 3 (KS3) domain in the interval 3-414 (QRRVAITGIE…GFQSAMVLTS (412 aa)). Residues Cys169, His307, and His344 each act as for beta-ketoacyl synthase activity in the active site.

It belongs to the thiolase-like superfamily. Beta-ketoacyl-ACP synthases family.

It participates in antifungal biosynthesis; monensin biosynthesis. The polypeptide is Putative polyketide beta-ketoacyl synthase 1 (Streptomyces virginiae (Streptomyces cinnamonensis)).